Reading from the N-terminus, the 198-residue chain is Recombination protein RecR (198 aa).

A C4-type zinc finger spans residues cysteine 57 to cysteine 72. The region spanning serine 80–serine 175 is the Toprim domain.

Belongs to the RecR family.

Functionally, may play a role in DNA repair. It seems to be involved in an RecBC-independent recombinational process of DNA repair. It may act with RecF and RecO. This chain is Recombination protein RecR, found in Staphylococcus aureus (strain MSSA476).